A 327-amino-acid chain; its full sequence is Cytochrome c oxidase subunit 2 (327 aa).

The signal sequence occupies residues 1–23 (MEQIPASIWTLTAGVVVTLISFW). A run of 2 helical transmembrane segments spans residues 56 to 78 (LFLV…AGEE) and 96 to 114 (AIPA…DIFQ). Residues His221, Cys255, Cys259, and His263 each contribute to the Cu cation site.

The protein belongs to the cytochrome c oxidase subunit 2 family. Requires Cu cation as cofactor.

The protein localises to the cell membrane. It catalyses the reaction 4 Fe(II)-[cytochrome c] + O2 + 8 H(+)(in) = 4 Fe(III)-[cytochrome c] + 2 H2O + 4 H(+)(out). In terms of biological role, subunits I and II form the functional core of the enzyme complex. Electrons originating in cytochrome c are transferred via heme a and Cu(A) to the binuclear center formed by heme a3 and Cu(B). This Thermostichus vulcanus (Synechococcus vulcanus) protein is Cytochrome c oxidase subunit 2 (ctaC).